The chain runs to 480 residues: Endoplasmic reticulum lectin 1 (480 aa).

The N-terminal stretch at 1-27 is a signal peptide; sequence MRRSDRFPCAGASLLVVLCGVFPSSFG. 2 consecutive MRH domains span residues 108 to 245 and 339 to 466; these read SSCS…LCNH and SYCF…ICKI. Cys110 and Cys123 are joined by a disulfide. The interval 152–172 is disordered; the sequence is VKKSPSEAGENQEDKERTEGH. Over residues 163-172 the composition is skewed to basic and acidic residues; sequence QEDKERTEGH. 5 disulfides stabilise this stretch: Cys198–Cys231, Cys214–Cys243, Cys341–Cys354, Cys418–Cys452, and Cys433–Cys464.

It is found in the endoplasmic reticulum lumen. In terms of biological role, probable lectin that binds selectively to improperly folded lumenal proteins. May function in endoplasmic reticulum quality control and endoplasmic reticulum-associated degradation (ERAD) of both non-glycosylated proteins and glycoproteins. The sequence is that of Endoplasmic reticulum lectin 1 (erlec1) from Xenopus laevis (African clawed frog).